The following is a 1026-amino-acid chain: DNA polymerase catalytic subunit (1026 aa).

A coiled-coil region spans residues 664 to 695 (LKTWLAKRKSIKKELEQCQDAKMKTILDKQQL).

The protein belongs to the DNA polymerase type-B family.

Its subcellular location is the host nucleus. It carries out the reaction DNA(n) + a 2'-deoxyribonucleoside 5'-triphosphate = DNA(n+1) + diphosphate. In terms of biological role, replicates viral genomic DNA. This chain is DNA polymerase catalytic subunit (9), found in Alcelaphine herpesvirus 1 (strain C500) (AlHV-1).